The following is a 245-amino-acid chain: Small ribosomal subunit protein uS2 (245 aa).

This sequence belongs to the universal ribosomal protein uS2 family.

This chain is Small ribosomal subunit protein uS2, found in Dehalococcoides mccartyi (strain CBDB1).